A 335-amino-acid polypeptide reads, in one-letter code: Acetyl-coenzyme A carboxylase carboxyl transferase subunit alpha (335 aa).

The CoA carboxyltransferase C-terminal domain occupies 48-308 (TLEKKVEALR…KGILIEELSA (261 aa)).

This sequence belongs to the AccA family. Acetyl-CoA carboxylase is a heterohexamer composed of biotin carboxyl carrier protein (AccB), biotin carboxylase (AccC) and two subunits each of ACCase subunit alpha (AccA) and ACCase subunit beta (AccD).

Its subcellular location is the cytoplasm. It catalyses the reaction N(6)-carboxybiotinyl-L-lysyl-[protein] + acetyl-CoA = N(6)-biotinyl-L-lysyl-[protein] + malonyl-CoA. It functions in the pathway lipid metabolism; malonyl-CoA biosynthesis; malonyl-CoA from acetyl-CoA: step 1/1. Its function is as follows. Component of the acetyl coenzyme A carboxylase (ACC) complex. First, biotin carboxylase catalyzes the carboxylation of biotin on its carrier protein (BCCP) and then the CO(2) group is transferred by the carboxyltransferase to acetyl-CoA to form malonyl-CoA. This chain is Acetyl-coenzyme A carboxylase carboxyl transferase subunit alpha, found in Chlorobium phaeovibrioides (strain DSM 265 / 1930) (Prosthecochloris vibrioformis (strain DSM 265)).